Consider the following 62-residue polypeptide: UPF0370 protein plu2724 (62 aa).

A helical membrane pass occupies residues Trp-3–Ile-23. The tract at residues Asp-36 to Pro-62 is disordered.

It belongs to the UPF0370 family.

It is found in the cell membrane. This Photorhabdus laumondii subsp. laumondii (strain DSM 15139 / CIP 105565 / TT01) (Photorhabdus luminescens subsp. laumondii) protein is UPF0370 protein plu2724.